The chain runs to 692 residues: Structure-specific endonuclease subunit SLX4 (692 aa).

Positions 39 to 59 (SDDEDQDEEQETEIPPEEGDD) are disordered.

Belongs to the SLX4 family. As to quaternary structure, forms a heterodimer with SLX1. Phosphorylated in response to DNA damage.

The protein resides in the nucleus. Regulatory subunit of the SLX1-SLX4 structure-specific endonuclease that resolves DNA secondary structures generated during DNA repair and recombination. Has endonuclease activity towards branched DNA substrates, introducing single-strand cuts in duplex DNA close to junctions with ss-DNA. The sequence is that of Structure-specific endonuclease subunit SLX4 from Kluyveromyces lactis (strain ATCC 8585 / CBS 2359 / DSM 70799 / NBRC 1267 / NRRL Y-1140 / WM37) (Yeast).